Here is a 216-residue protein sequence, read N- to C-terminus: uncharacterized protein (216 aa).

Residues 1–216 enclose the N-acetyltransferase domain; sequence MVVKIVEAYE…DVTFLKLKLK (216 aa).

Belongs to the acetyltransferase family.

This is an uncharacterized protein from Dictyostelium discoideum (Social amoeba).